Here is a 309-residue protein sequence, read N- to C-terminus: Assembly-complementing factor 4 (309 aa).

Disordered regions lie at residues M1 to I80, K164 to P240, and V286 to R309. Basic and acidic residues-rich tracts occupy residues E13–S24 and K34–S44. 5 positions are modified to phosphoserine: S44, S71, S74, S78, and S165. The segment covering S61–I80 has biased composition (polar residues). 3 stretches are compositionally biased toward low complexity: residues N174–R188, P205–T214, and P222–T239. Residues R287–P298 show a composition bias toward acidic residues. The residue at position 288 (S288) is a Phosphoserine.

Its function is as follows. May be involved in actin cytoskeleton organization and biogenesis. This Saccharomyces cerevisiae (strain ATCC 204508 / S288c) (Baker's yeast) protein is Assembly-complementing factor 4 (ACF4).